We begin with the raw amino-acid sequence, 483 residues long: MRHSKRTYCPDWDERDWDYGTWRSSSSHKRKKRSHSSAREQKRCRYDHSKTTDSYYLESRSINEKAYHSRRYVDEYRNDYMGYEPGHPYGEPGSRYQMHSSKSSGRSGRSSYKSKHRSRHHTSQHHSHGKSHRRKRSRSVEDDEEGHLICQSGDVLSARYEIVDTLGEGAFGKVVECIDHKVGGRRVAVKIVKNVDRYCEAAQSEIQVLEHLNTTDPHSTFRCVQMLEWFEHRGHICIVFELLGLSTYDFIKENSFLPFRMDHIRKMAYQICKSVNFLHSNKLTHTDLKPENILFVKSDYTEAYNPKMKRDERTIVNPDIKVVDFGSATYDDEHHSTLVSTRHYRAPEVILALGWSQPCDVWSIGCILIEYYLGFTVFPTHDSREHLAMMERILGPLPKHMIQKTRKRRYFHHDRLDWDEHSSAGRYVSRRCKPLKEFMLSQDAEHELLFDLIGKMLEYDPAKRITLKEALKHPFFYPLKKHT.

A disordered region spans residues 1-49; that stretch reads MRHSKRTYCPDWDERDWDYGTWRSSSSHKRKKRSHSSAREQKRCRYDHS. The span at 26-36 shows a compositional bias: basic residues; it reads SSHKRKKRSHS. The Nuclear localization signal signature appears at 29–33; it reads KRKKR. The segment covering 37-49 has biased composition (basic and acidic residues); sequence SAREQKRCRYDHS. The residue at position 61 (Ser61) is a Phosphoserine. Residues 84–111 are compositionally biased toward low complexity; it reads EPGHPYGEPGSRYQMHSSKSSGRSGRSS. The segment at 84–146 is disordered; it reads EPGHPYGEPG…SRSVEDDEEG (63 aa). Residues 112–137 show a composition bias toward basic residues; it reads YKSKHRSRHHTSQHHSHGKSHRRKRS. Phosphoserine is present on Ser139. The region spanning 160–476 is the Protein kinase domain; sequence YEIVDTLGEG…LKEALKHPFF (317 aa). Residues 166 to 174 and Lys190 each bind ATP; that span reads LGEGAFGKV. Asp287 functions as the Proton acceptor in the catalytic mechanism.

The protein belongs to the protein kinase superfamily. CMGC Ser/Thr protein kinase family. Lammer subfamily. Interacts with PPIG and UBL5. Autophosphorylates on all three types of residues.

The protein localises to the nucleus. The catalysed reaction is L-seryl-[protein] + ATP = O-phospho-L-seryl-[protein] + ADP + H(+). It catalyses the reaction L-threonyl-[protein] + ATP = O-phospho-L-threonyl-[protein] + ADP + H(+). The enzyme catalyses L-tyrosyl-[protein] + ATP = O-phospho-L-tyrosyl-[protein] + ADP + H(+). Its activity is regulated as follows. Regulates splicing of its own pre-mRNA according to its kinase activity; increased expression of the catalytically active form influences splicing to generate the catalytically inactive splicing variant lacking the kinase domain. Leucettine L41 inhibits its kinase activity and affects the regulation of alternative splicing mediated by phosphorylation of SR proteins. Functionally, dual specificity kinase acting on both serine/threonine and tyrosine-containing substrates. Phosphorylates serine- and arginine-rich (SR) proteins of the spliceosomal complex and may be a constituent of a network of regulatory mechanisms that enable SR proteins to control RNA splicing. Phosphorylates: SRSF1, SRSF3 and PTPN1. Regulates the alternative splicing of tissue factor (F3) pre-mRNA in endothelial cells. The polypeptide is Dual specificity protein kinase CLK1 (Mus musculus (Mouse)).